Consider the following 189-residue polypeptide: Ribosome maturation factor RimM (189 aa).

In terms of domain architecture, PRC barrel spans 113–189 (DGEYYWVDLL…TIVADWQPDY (77 aa)).

The protein belongs to the RimM family. As to quaternary structure, binds ribosomal protein uS19.

It localises to the cytoplasm. Functionally, an accessory protein needed during the final step in the assembly of 30S ribosomal subunit, possibly for assembly of the head region. Essential for efficient processing of 16S rRNA. May be needed both before and after RbfA during the maturation of 16S rRNA. It has affinity for free ribosomal 30S subunits but not for 70S ribosomes. The protein is Ribosome maturation factor RimM of Delftia acidovorans (strain DSM 14801 / SPH-1).